Here is a 127-residue protein sequence, read N- to C-terminus: Group 3 truncated hemoglobin ctb (127 aa).

Heme contacts are provided by tyrosine 64 and histidine 72.

This sequence belongs to the truncated hemoglobin family. Group III subfamily. Monomer. Heme serves as cofactor.

It localises to the cytoplasm. Its function is as follows. Has been suggested to be involved in cytochrome c peroxidase or P450-like oxygen chemistry or cyanide detoxification. The high oxygen affinity of this protein suggests that it probably does not function as an oxygen transporter. In Campylobacter jejuni subsp. jejuni serotype O:2 (strain ATCC 700819 / NCTC 11168), this protein is Group 3 truncated hemoglobin ctb (ctb).